The sequence spans 317 residues: Methionyl-tRNA formyltransferase (317 aa).

(6S)-5,6,7,8-tetrahydrofolate is bound at residue 110-113 (SLLP). Positions 292–317 (RMKGEDFVRGKNVQPGDVLGEANEEN) are disordered.

The protein belongs to the Fmt family.

The catalysed reaction is L-methionyl-tRNA(fMet) + (6R)-10-formyltetrahydrofolate = N-formyl-L-methionyl-tRNA(fMet) + (6S)-5,6,7,8-tetrahydrofolate + H(+). Its function is as follows. Attaches a formyl group to the free amino group of methionyl-tRNA(fMet). The formyl group appears to play a dual role in the initiator identity of N-formylmethionyl-tRNA by promoting its recognition by IF2 and preventing the misappropriation of this tRNA by the elongation apparatus. This Bacillus velezensis (strain DSM 23117 / BGSC 10A6 / LMG 26770 / FZB42) (Bacillus amyloliquefaciens subsp. plantarum) protein is Methionyl-tRNA formyltransferase.